Here is a 233-residue protein sequence, read N- to C-terminus: Small ribosomal subunit protein uS2 (233 aa).

It belongs to the universal ribosomal protein uS2 family.

The polypeptide is Small ribosomal subunit protein uS2 (Clostridium botulinum (strain Hall / ATCC 3502 / NCTC 13319 / Type A)).